We begin with the raw amino-acid sequence, 171 residues long: Large ribosomal subunit protein bL17 (171 aa).

A disordered region spans residues 130–171 (PGYKKSKGKKATKAKGKKAKATPAAEAAAAATTEAAPAEEKK). Residues 133 to 149 (KKSKGKKATKAKGKKAK) are compositionally biased toward basic residues. The span at 150-165 (ATPAAEAAAAATTEAA) shows a compositional bias: low complexity.

The protein belongs to the bacterial ribosomal protein bL17 family. In terms of assembly, part of the 50S ribosomal subunit. Contacts protein L32.

This is Large ribosomal subunit protein bL17 from Opitutus terrae (strain DSM 11246 / JCM 15787 / PB90-1).